The chain runs to 581 residues: Semenogelin-2 (581 aa).

The signal sequence occupies residues 1–23 (MKSIILFVLSLLLILEKQAAVMG). Disordered regions lie at residues 24–62 (QKGG…SKGS), 132–157 (GGKA…GISS), 173–194 (KEQA…QSSY), and 271–581 (NLNQ…PIST). 2 stretches are compositionally biased toward polar residues: residues 138 to 157 (GTQN…GISS) and 174 to 194 (EQAS…QSSY). The segment covering 291-310 (HTEERQLNHGEKSVQKDISK) has biased composition (basic and acidic residues). Residues 324-333 (KSQNQVTIHS) show a composition bias toward polar residues. Positions 334–344 (QDQEHGHKENK) are enriched in basic and acidic residues. A compositionally biased stretch (polar residues) spans 366 to 396 (KSVSKGSISIQTEEQIHGKSQNQVRIPSQAQ). Composition is skewed to basic and acidic residues over residues 412–425 (TEER…KDIQ) and 455–464 (DQEHGHKENK). 2 stretches are compositionally biased toward polar residues: residues 481–497 (GKNT…SFQT) and 505–529 (SQIQ…SGQS). 2 stretches are compositionally biased toward basic and acidic residues: residues 530–545 (ADRE…KGRY) and 558–581 (TEHE…PIST).

Belongs to the semenogelin family. In terms of assembly, interacts with SERPINA5.

It is found in the secreted. Functionally, participates in the formation of a gel matrix (sperm coagulum) entrapping the accessory gland secretions and ejaculated spermatozoa. The sequence is that of Semenogelin-2 (SEMG2) from Pongo abelii (Sumatran orangutan).